Here is a 205-residue protein sequence, read N- to C-terminus: DNA-directed RNA polymerase RPB5 homolog (205 aa).

The protein belongs to the archaeal RpoH/eukaryotic RPB5 RNA polymerase subunit family. Part of the viral DNA-directed RNA polymerase that consists of 8 polII-like subunits (RPB1, RPB2, RPB3, RPB5, RPB6, RPB7, RPB9, RPB10), a capping enzyme and a termination factor.

The protein resides in the host cytoplasm. Its subcellular location is the virion. Component of the DNA-directed RNA polymerase (RNAP) that catalyzes the transcription in the cytoplasm of viral DNA into RNA using the four ribonucleoside triphosphates as substrates. This chain is DNA-directed RNA polymerase RPB5 homolog, found in Ornithodoros (relapsing fever ticks).